The chain runs to 113 residues: U11-theraphotoxin-Hhn1d (113 aa).

A signal peptide spans 1–21; the sequence is MNTVRVTFLLVFVVAVSLGQA. The propeptide occupies 22–74; the sequence is DKDENRMEMKDKTEQGKSYLHFAENLLLQKLEDVEAKLLEKDSEKSINSRQKR. 3 disulfide bridges follow: C75–C90, C82–C95, and C89–C110.

Belongs to the neurotoxin 14 (magi-1) family. 01 (HNTX-16) subfamily. Expressed by the venom gland.

The protein localises to the secreted. Functionally, probable ion channel inhibitor. In Cyriopagopus hainanus (Chinese bird spider), this protein is U11-theraphotoxin-Hhn1d.